A 373-amino-acid polypeptide reads, in one-letter code: Probable neutral protease 2 homolog MCYG_05201 (373 aa).

The signal sequence occupies residues 1-19 (MQFFTALAAVGALVAPALA). Residues 20–187 (LPTQVPANQS…AHIVGTIDKR (168 aa)) constitute a propeptide that is removed on maturation. 2 disulfides stabilise this stretch: Cys195–Cys265 and Cys272–Cys290. A Zn(2+)-binding site is contributed by His314. The active site involves Glu315. Zn(2+) is bound by residues His318 and Asp329.

This sequence belongs to the peptidase M35 family. Requires Zn(2+) as cofactor.

It is found in the secreted. The catalysed reaction is Preferential cleavage of bonds with hydrophobic residues in P1'. Also 3-Asn-|-Gln-4 and 8-Gly-|-Ser-9 bonds in insulin B chain.. Probable secreted metalloprotease that shows high activities on basic nuclear substrates such as histone and protamine. May be involved in virulence. The chain is Probable neutral protease 2 homolog MCYG_05201 from Arthroderma otae (strain ATCC MYA-4605 / CBS 113480) (Microsporum canis).